A 273-amino-acid polypeptide reads, in one-letter code: MIVVQVSDTHIKSKGKLAYNKVDIHKALYNCILHINNLKPKPDLVIFTGDITDNGTNEEYKLFKETVKLLDVPFYVIPGNHDNAENLKREFEEYDWFEENNHLSLVIEDFPIRIIGLDSSIKGKSYGGLSEERLLWLEKQLNKFPDKKVLLFIHHPPVKIGIEHMDVQNLQIGRERLADLLGKYEQVLALACGHVHRVSTTLWNKIIVLTAASPSHQVALDLRKDAKAEFVMEPPSVQLHYWTEEQGLTTHTSYIGKFEGPYPFYNEKGELID.

Fe cation-binding residues include D8, H10, D50, N80, H154, H194, and H196.

Belongs to the cyclic nucleotide phosphodiesterase class-III family. The cofactor is Fe(2+).

It carries out the reaction a sn-glycero-3-phosphodiester + H2O = an alcohol + sn-glycerol 3-phosphate + H(+). It catalyses the reaction sn-glycero-3-phosphoethanolamine + H2O = ethanolamine + sn-glycerol 3-phosphate + H(+). In terms of biological role, catalyzes the hydrolysis of the 3'-5' phosphodiester bond of glycerophosphodiesters such as glycerophosphorylethanolamine (GPE), a typical phospholipid metabolite. The protein is Probable glycerophosphodiester phosphodiesterase GpdQ of Arcobacter nitrofigilis (strain ATCC 33309 / DSM 7299 / CCUG 15893 / LMG 7604 / NCTC 12251 / CI) (Campylobacter nitrofigilis).